We begin with the raw amino-acid sequence, 445 residues long: Sterile alpha motif domain-containing protein 7 (445 aa).

The segment at 98-172 (HAARAEMEMY…HLQGNPILLA (75 aa)) is required for localization to nuclear polycomb bodies. Residues 193-282 (YQKPPESDTE…WDDGKGKPSE (90 aa)) form a disordered region. A compositionally biased stretch (basic and acidic residues) spans 227-244 (IKDPDIEVDNQQKPRVAD). The 55-residue stretch at 324–378 (WTVDDVYNFIRSLPGCSDYAQVFKDHAIDGETLPLLTEQHLRGTMGLKLGPALKI) folds into the SAM domain. The tract at residues 425 to 445 (SIPGPQDLLSPKRTEQDVMRN) is disordered. Residues 434 to 445 (SPKRTEQDVMRN) are compositionally biased toward basic and acidic residues.

As to quaternary structure, monomer, homodimer and homooligomer. Component of a Polycomb group (PcG) multiprotein PRC1-like complex. Interacts with PHC2 and NR2E3. Interacts with RNF1 in a PHC2-dependent manner. Interacts with SAMD11. Expressed in the retina and the pineal gland. In the retina, it is predominantly expressed in the outer nuclear layer and developing rod photoreceptors.

The protein resides in the nucleus. The protein localises to the cytoplasm. Component of a Polycomb group (PcG) multiprotein PRC1-like complex, essential for establishing rod photoreceptor cell identity and function by silencing nonrod gene expression in developing rod photoreceptor cells. Via its association with the PRC1-like complex, promotes epigenetic repressive marks H3K27me3 and H2AK119ub marks in nonrod genes, silencing their transcription. Represses Crx-controlled photoreceptor-specific gene expression. The chain is Sterile alpha motif domain-containing protein 7 (Samd7) from Mus musculus (Mouse).